We begin with the raw amino-acid sequence, 174 residues long: Protein PopB (174 aa).

Positions 1 to 174 are disordered; it reads MSHSKIKAGG…EAMKIKDDDD (174 aa). The segment covering 50 to 65 has biased composition (polar residues); sequence LNKSNLGSDSQTWTPG. A compositionally biased stretch (low complexity) spans 66 to 78; the sequence is STMVSLKSRSSSS. Residues 79–89 are compositionally biased toward basic and acidic residues; that stretch reads HKPDTGGDTKP. The span at 147 to 161 shows a compositional bias: low complexity; that stretch reads IALQRAIQRQTQTRQ. A compositionally biased stretch (basic and acidic residues) spans 162–174; that stretch reads KMQEAMKIKDDDD.

The protein resides in the secreted. In terms of biological role, probably involved in host-pathogen interactions. The chain is Protein PopB (popB) from Ralstonia nicotianae (strain ATCC BAA-1114 / GMI1000) (Ralstonia solanacearum).